We begin with the raw amino-acid sequence, 308 residues long: Barttin (308 aa).

Over Met-1 to Lys-5 the chain is Cytoplasmic. Residues Met-1–Met-72 are regulates channel membrane trafficking and anion conductance. The helical transmembrane segment at Thr-6–Met-26 threads the bilayer. Residues Ser-27–Gln-32 lie on the Extracellular side of the membrane. The chain crosses the membrane as a helical span at residues Val-33 to Met-53. Residues Cys-54 and Cys-56 are each lipidated (S-palmitoyl cysteine). The Cytoplasmic portion of the chain corresponds to Cys-54–Gly-308. Ser-79 and Ser-107 each carry phosphoserine. 2 disordered regions span residues Pro-127–Gln-149 and Leu-162–Gly-308. The span at Leu-162–Arg-171 shows a compositional bias: basic and acidic residues. Polar residues predominate over residues Ser-172 to Ser-183. Over residues Glu-274–Leu-283 the composition is skewed to acidic residues. Position 290 is a phosphoserine (Ser-290).

As to quaternary structure, interacts with CLCNK channels. Forms heteromers with CLCNKA in the thin ascending limb of Henle and with CLCNKB in the thick ascending limb and more distal segments. Palmitoylation is necessary for activation of plasma membrane-inserted CLC-K/barttin channels. In terms of tissue distribution, expressed along the distal nephron.

Its subcellular location is the basolateral cell membrane. Functionally, regulatory subunit of anion-selective CLCNKA:BSND and CLCNKB:BSND heteromeric channels involved in basolateral chloride conductance along the nephron to achieve urine concentration and maintain systemic acid-base homeostasis, and in the stria vascularis of the inner ear to establish the endocochlear potential necessary for normal hearing. Most likely acts as a chaperone that allosterically regulates proper sorting of CLCNKA:BSND and CLCNKB:BSND channels at the basolateral plasma membrane domain and functional switch to ion conducting state. Mediates constitutive opening of channel common gates. This is Barttin from Rattus norvegicus (Rat).